A 548-amino-acid chain; its full sequence is Chaperonin GroEL (548 aa).

ATP-binding positions include 30 to 33 (TLGP), lysine 51, 87 to 91 (DGTTT), glycine 415, 479 to 481 (NAA), and aspartate 495.

Belongs to the chaperonin (HSP60) family. In terms of assembly, forms a cylinder of 14 subunits composed of two heptameric rings stacked back-to-back. Interacts with the co-chaperonin GroES.

It localises to the cytoplasm. The enzyme catalyses ATP + H2O + a folded polypeptide = ADP + phosphate + an unfolded polypeptide.. Functionally, together with its co-chaperonin GroES, plays an essential role in assisting protein folding. The GroEL-GroES system forms a nano-cage that allows encapsulation of the non-native substrate proteins and provides a physical environment optimized to promote and accelerate protein folding. This Klebsiella aerogenes (strain ATCC 13048 / DSM 30053 / CCUG 1429 / JCM 1235 / KCTC 2190 / NBRC 13534 / NCIMB 10102 / NCTC 10006 / CDC 819-56) (Enterobacter aerogenes) protein is Chaperonin GroEL.